Reading from the N-terminus, the 399-residue chain is Phosphoglycerate kinase (399 aa).

Substrate contacts are provided by residues 20–22, Arg35, 58–61, Arg117, and Arg154; these read DFN and HLGR. ATP contacts are provided by residues Lys204, Gly295, Glu326, and 355-358; that span reads GGDS.

Belongs to the phosphoglycerate kinase family. In terms of assembly, monomer.

Its subcellular location is the cytoplasm. It catalyses the reaction (2R)-3-phosphoglycerate + ATP = (2R)-3-phospho-glyceroyl phosphate + ADP. It functions in the pathway carbohydrate degradation; glycolysis; pyruvate from D-glyceraldehyde 3-phosphate: step 2/5. The sequence is that of Phosphoglycerate kinase from Beutenbergia cavernae (strain ATCC BAA-8 / DSM 12333 / CCUG 43141 / JCM 11478 / NBRC 16432 / NCIMB 13614 / HKI 0122).